An 896-amino-acid polypeptide reads, in one-letter code: UPF0182 protein GM21_2279 (896 aa).

7 helical membrane passes run 6–26 (MTFI…LLSF), 46–66 (VYAQ…FLQL), 99–119 (LVRP…GNWG), 158–180 (LLKS…AYYV), 201–221 (LAVL…LESF), 245–265 (TLRI…LGIW), and 271–291 (LALG…RVYP).

The protein belongs to the UPF0182 family.

The protein resides in the cell membrane. This Geobacter sp. (strain M21) protein is UPF0182 protein GM21_2279.